The chain runs to 367 residues: CST complex subunit STN1 (367 aa).

A DNA-binding region (OB) is located at residues 56 to 154; sequence VEILGTVIGR…EIRVTTYYKV (99 aa). Winged helix-turn-helix (wHTH) stretches follow at residues 190 to 294 and 295 to 367; these read RAFS…YVTR and EDKE…YTAF.

This sequence belongs to the STN1 family. In terms of assembly, component of the CST complex, composed of TEN1, CTC1 and STN1. Interacts with TEN1 and CTC1; the interaction is direct. Interacts with ACD/TPP1.

The protein localises to the nucleus. It localises to the chromosome. It is found in the telomere. Its function is as follows. Component of the CST complex, a complex that binds to single-stranded DNA and is required to protect telomeres from DNA degradation. The CST complex binds single-stranded DNA with high affinity in a sequence-independent manner, while isolated subunits bind DNA with low affinity by themselves. In addition to telomere protection, the CST complex has probably a more general role in DNA metabolism at non-telomeric sites. The protein is CST complex subunit STN1 of Ailuropoda melanoleuca (Giant panda).